A 567-amino-acid chain; its full sequence is Urease subunit alpha 1 (567 aa).

The 440-residue stretch at 128-567 (GAVDTHVHYI…LPLAQLYHLF (440 aa)) folds into the Urease domain. The Ni(2+) site is built by His-133, His-135, and Lys-216. At Lys-216 the chain carries N6-carboxylysine. A substrate-binding site is contributed by His-218. Ni(2+) is bound by residues His-245 and His-271. Residue His-319 is the Proton donor of the active site. Asp-359 serves as a coordination point for Ni(2+).

It belongs to the metallo-dependent hydrolases superfamily. Urease alpha subunit family. As to quaternary structure, heterotrimer of UreA (gamma), UreB (beta) and UreC (alpha) subunits. Three heterotrimers associate to form the active enzyme. Ni cation serves as cofactor. In terms of processing, carboxylation allows a single lysine to coordinate two nickel ions.

The protein localises to the cytoplasm. It carries out the reaction urea + 2 H2O + H(+) = hydrogencarbonate + 2 NH4(+). It participates in nitrogen metabolism; urea degradation; CO(2) and NH(3) from urea (urease route): step 1/1. In Psychrobacter cryohalolentis (strain ATCC BAA-1226 / DSM 17306 / VKM B-2378 / K5), this protein is Urease subunit alpha 1.